The following is a 72-amino-acid chain: Translation initiation factor IF-1 (72 aa).

One can recognise an S1-like domain in the interval 1-72 (MAKEDSIEMQ…TKGRIIFRAR (72 aa)).

This sequence belongs to the IF-1 family. In terms of assembly, component of the 30S ribosomal translation pre-initiation complex which assembles on the 30S ribosome in the order IF-2 and IF-3, IF-1 and N-formylmethionyl-tRNA(fMet); mRNA recruitment can occur at any time during PIC assembly.

Its subcellular location is the cytoplasm. Functionally, one of the essential components for the initiation of protein synthesis. Stabilizes the binding of IF-2 and IF-3 on the 30S subunit to which N-formylmethionyl-tRNA(fMet) subsequently binds. Helps modulate mRNA selection, yielding the 30S pre-initiation complex (PIC). Upon addition of the 50S ribosomal subunit IF-1, IF-2 and IF-3 are released leaving the mature 70S translation initiation complex. The protein is Translation initiation factor IF-1 of Actinobacillus succinogenes (strain ATCC 55618 / DSM 22257 / CCUG 43843 / 130Z).